The sequence spans 493 residues: Glutamate--tRNA ligase (493 aa).

The short motif at 9 to 19 (PSPTGDPHVGT) is the 'HIGH' region element. Residues 249–253 (KLSKR) carry the 'KMSKS' region motif. K252 contacts ATP.

It belongs to the class-I aminoacyl-tRNA synthetase family. Glutamate--tRNA ligase type 1 subfamily. In terms of assembly, monomer.

It localises to the cytoplasm. It carries out the reaction tRNA(Glu) + L-glutamate + ATP = L-glutamyl-tRNA(Glu) + AMP + diphosphate. Functionally, catalyzes the attachment of glutamate to tRNA(Glu) in a two-step reaction: glutamate is first activated by ATP to form Glu-AMP and then transferred to the acceptor end of tRNA(Glu). The sequence is that of Glutamate--tRNA ligase from Marinobacter nauticus (strain ATCC 700491 / DSM 11845 / VT8) (Marinobacter aquaeolei).